The following is a 322-amino-acid chain: Biotin synthase (322 aa).

One can recognise a Radical SAM core domain in the interval 39 to 266 (NQIQVSSLLN…KSVVRLSAGR (228 aa)). Residues Cys-54, Cys-58, and Cys-61 each contribute to the [4Fe-4S] cluster site. The [2Fe-2S] cluster site is built by Cys-98, Cys-129, Cys-189, and Arg-261.

This sequence belongs to the radical SAM superfamily. Biotin synthase family. Homodimer. It depends on [4Fe-4S] cluster as a cofactor. [2Fe-2S] cluster is required as a cofactor.

The enzyme catalyses (4R,5S)-dethiobiotin + (sulfur carrier)-SH + 2 reduced [2Fe-2S]-[ferredoxin] + 2 S-adenosyl-L-methionine = (sulfur carrier)-H + biotin + 2 5'-deoxyadenosine + 2 L-methionine + 2 oxidized [2Fe-2S]-[ferredoxin]. The protein operates within cofactor biosynthesis; biotin biosynthesis; biotin from 7,8-diaminononanoate: step 2/2. Catalyzes the conversion of dethiobiotin (DTB) to biotin by the insertion of a sulfur atom into dethiobiotin via a radical-based mechanism. The polypeptide is Biotin synthase (Ruthia magnifica subsp. Calyptogena magnifica).